The chain runs to 398 residues: Chalcone synthase (398 aa).

Residue Cys-169 is part of the active site.

The protein belongs to the thiolase-like superfamily. Chalcone/stilbene synthases family.

The enzyme catalyses (E)-4-coumaroyl-CoA + 3 malonyl-CoA + 3 H(+) = 2',4,4',6'-tetrahydroxychalcone + 3 CO2 + 4 CoA. It participates in secondary metabolite biosynthesis; flavonoid biosynthesis. The primary product of this enzyme is 4,2',4',6'-tetrahydroxychalcone (also termed naringenin-chalcone or chalcone) which can under specific conditions spontaneously isomerize into naringenin. The sequence is that of Chalcone synthase (CHS) from Petroselinum crispum (Parsley).